Here is a 368-residue protein sequence, read N- to C-terminus: Type 2 DNA topoisomerase 6 subunit A (368 aa).

Positions P9–A148 constitute a Topo IIA-type catalytic domain. Residue Y103 is the O-(5'-phospho-DNA)-tyrosine intermediate of the active site. 2 residues coordinate Mg(2+): E201 and D253.

The protein belongs to the TOP6A family. Homodimer. Heterotetramer of two Top6A and two Top6B chains. Mg(2+) is required as a cofactor.

It carries out the reaction ATP-dependent breakage, passage and rejoining of double-stranded DNA.. Functionally, relaxes both positive and negative superturns and exhibits a strong decatenase activity. The polypeptide is Type 2 DNA topoisomerase 6 subunit A (Haloarcula marismortui (strain ATCC 43049 / DSM 3752 / JCM 8966 / VKM B-1809) (Halobacterium marismortui)).